The chain runs to 241 residues: Transcription factor HEC1 (241 aa).

Residues 128–177 (ISKDPQSVAARHRRERISERIRILQRLVPGGTKMDTASMLDEAIHYVKFL) enclose the bHLH domain.

As to quaternary structure, homodimer. Interacts with SPT. Interacts with BZIP30. Flowers, especially in gynoecium.

It localises to the nucleus. Its function is as follows. Required for the female reproductive tract development and fertility. The polypeptide is Transcription factor HEC1 (HEC1) (Arabidopsis thaliana (Mouse-ear cress)).